The following is a 157-amino-acid chain: Monooxygenase CPUR_05417 (157 aa).

This sequence belongs to the avfA family.

It participates in secondary metabolite biosynthesis. Monooxygenase; part of the ergochrome gene cluster responsible for the typical purple-black color of the ergot sclerotia. The ergochrome gene cluster produces several ergot pigments including the yellow ergochrome secalonic acid and its derivatives, as well as the red anthraquinones endocrocin and clavorubin. The pathway begins with the synthesis of atrochrysone thioester by the polyketide synthase (PKS) CPUR_05437. The atrochrysone carboxyl ACP thioesterase CPUR_05436 then breaks the thioester bond and releases the atrochrysone carboxylic acid from CPUR_05437. The atrochrysone carboxylic acid is then converted to atrochrysone which is further transformed into emodin anthrone. The next step is performed by the anthrone oxygenase CPUR_05434 that catalyzes the oxidation of emodinanthrone to emodin. Emodin is further modified to yield monodictyphenone via several steps involving CPUR_05427, CPUR_05428, CPUR_05429 and CPUR_05430. The short chain dehydrogenase/reductase CPUR_05418 then catalyzes the C-5 ketoreduction to give the xanthone skeleton of the monomeric units. Ergochromes formation requires further dimerization steps of different xanthone units, probably catalyzed by the cytochrome P450 monooxygenase CPUR_05419. CPUR_05425, CPUR_05426 and CPUR_05431 are unique to Claviceps, thus it is likely that they are involved in further modification of xanthone units or in their dimerization. The yellow ergochromes and the red anthraquinone pigments endocrocin and clavorubin are products from the same PKS derived precursors and the latter are likely shunt products in the pathway of xanthone biosynthesis. It is proposed that atrochrysone carboxylic acid released from the PKS CPUR_05437 can also be converted to endocrocin anthrone which is further oxidized into endocrocin by CPUR_05435. Endocrocin could be then modified to clavorubin, possibly by CPUR_05423 and CPUR_05431. Clavorubin is the principal anthraquinone metabolite produced by the cluster with a much higher yield compared to endocrocin. This is Monooxygenase CPUR_05417 from Claviceps purpurea (strain 20.1) (Ergot fungus).